Here is a 312-residue protein sequence, read N- to C-terminus: Ornithine carbamoyltransferase (312 aa).

Carbamoyl phosphate-binding positions include 50–53 (STRT), Gln-77, Arg-101, and 128–131 (HPCQ). Residues Asn-159, Asp-223, and 227–228 (SM) contribute to the L-ornithine site. Carbamoyl phosphate-binding positions include 263–264 (CL) and Arg-291.

Belongs to the aspartate/ornithine carbamoyltransferase superfamily. OTCase family.

The protein resides in the cytoplasm. It carries out the reaction carbamoyl phosphate + L-ornithine = L-citrulline + phosphate + H(+). The protein operates within amino-acid biosynthesis; L-arginine biosynthesis; L-arginine from L-ornithine and carbamoyl phosphate: step 1/3. Its function is as follows. Reversibly catalyzes the transfer of the carbamoyl group from carbamoyl phosphate (CP) to the N(epsilon) atom of ornithine (ORN) to produce L-citrulline. The protein is Ornithine carbamoyltransferase of Acidothermus cellulolyticus (strain ATCC 43068 / DSM 8971 / 11B).